Consider the following 427-residue polypeptide: L-rhamnose isomerase (427 aa).

3 residues coordinate Mn(2+): His-264, Asp-296, and Asp-298.

This sequence belongs to the rhamnose isomerase family. Mn(2+) is required as a cofactor.

The protein localises to the cytoplasm. It catalyses the reaction L-rhamnopyranose = L-rhamnulose. It functions in the pathway carbohydrate degradation; L-rhamnose degradation; glycerone phosphate from L-rhamnose: step 1/3. Catalyzes the interconversion of L-rhamnose and L-rhamnulose. The protein is L-rhamnose isomerase of Lactiplantibacillus plantarum (strain ATCC BAA-793 / NCIMB 8826 / WCFS1) (Lactobacillus plantarum).